Here is a 616-residue protein sequence, read N- to C-terminus: Zinc metalloproteinase-disintegrin-like VLAIP-A (616 aa).

The signal sequence occupies residues 1-20; the sequence is MMQVLLVTISLAVFPYQGSS. The propeptide occupies 21-194; sequence IILESGNVND…KASQLNLTPE (174 aa). Q195 is subject to Pyrrolidone carboxylic acid. Residues 203 to 399 form the Peptidase M12B domain; that stretch reads KYIKLVIVAD…KMPQCILNKP (197 aa). 3 disulfide bridges follow: C314/C394, C354/C378, and C356/C361. Position 339 (H339) interacts with Zn(2+). Residue E340 is part of the active site. 2 residues coordinate Zn(2+): H343 and H349. The N-linked (GlcNAc...) asparagine glycan is linked to N377. In terms of domain architecture, Disintegrin spans 407–493; sequence PAVCGNYLVE…ECPTDQFQRN (87 aa). Residues V409, N412, L414, E416, E419, and D422 each coordinate Ca(2+). Disulfide bonds link C410-C439, C421-C434, C423-C429, C433-C456, C447-C453, C452-C478, C465-C485, C472-C504, C497-C509, C516-C566, C531-C577, C544-C554, C561-C603, and C597-C609. The D/ECD-tripeptide motif lies at 471 to 473; sequence ECD.

The protein belongs to the venom metalloproteinase (M12B) family. P-III subfamily. P-IIIc sub-subfamily. Heterodimer; disulfide-linked. The cofactor is Zn(2+). Post-translationally, the N-terminus is blocked. Expressed by the venom gland.

The protein resides in the secreted. Its activity is regulated as follows. Inhibited by EDTA or 1,10-phenanthroline. Not inhibited by PMSF. Snake venom zinc metalloprotease that hydrolyzes the alpha-chain (FGA) and more slowly the beta-chain (FGB) of fibrinogen, without affecting the gamma-chain. Cleaves alpha-chain of fibrinogen at '432-Lys-|-Leu-433' and '535-Pro-|-Met-536' bonds. Induces apoptosis in vascular endothelial cells and inhibits endothelial cell adhesion to extracellular matrix proteins such as fibrinogen, fibronectin, vitronectin, collagen I, and collagen IV. Also hydrolyzes azocasein, and insulin B-chain (at the '38-Ala-|-Leu-39' bond). The sequence is that of Zinc metalloproteinase-disintegrin-like VLAIP-A from Macrovipera lebetinus (Levantine viper).